A 432-amino-acid chain; its full sequence is Serine/threonine-protein phosphatase 2A activator 1 (432 aa).

The disordered stretch occupies residues 322 to 432 (PYSKVEDEEP…MAPTKAPWAK (111 aa)). Residues 366 to 389 (TVERLARRDGQRAAREKEEREDRA) show a composition bias toward basic and acidic residues. Residues 396–412 (TTGAPGATALPPTRAPG) are compositionally biased toward low complexity.

This sequence belongs to the PTPA-type PPIase family.

Its subcellular location is the cytoplasm. It localises to the nucleus. The enzyme catalyses [protein]-peptidylproline (omega=180) = [protein]-peptidylproline (omega=0). Functionally, PPIases accelerate the folding of proteins. It catalyzes the cis-trans isomerization of proline imidic peptide bonds in oligopeptides. Acts as a regulatory subunit for PP2A-like phosphatases modulating their activity or substrate specificity, probably by inducing a conformational change in the catalytic subunit, a direct target of the PPIase. Can reactivate inactive phosphatase PP2A-phosphatase methylesterase complexes (PP2Ai) in presence of ATP and Mg(2+) by dissociating the inactive form from the complex. This Yarrowia lipolytica (strain CLIB 122 / E 150) (Yeast) protein is Serine/threonine-protein phosphatase 2A activator 1 (RRD1).